Consider the following 212-residue polypeptide: MAQAIIGAIAASTAGSALGAGIQVGGEAALQSQRYQQNLQLQENSFKHDREMIGYQVEASNQLLAKNLATRYSLLRAGGLTSADAARSVAGAPVTRIVDWNGVRVSAPESSATTLRSGGFMSVPIPFASKQKQVQSSGISNPNYSPSSISRTTSWVESQNSSRFGNLSPYHAEALNTVWLTPPGSTASSTLSSVPRGYFNTDRLPLFANNRR.

The protein belongs to the norovirus VP2 family. As to quaternary structure, homooligomer. The portal-like structure consists in 12 copies of VP2. Interacts with capsid protein VP1.

Its subcellular location is the virion. The protein resides in the host cytoplasm. Functionally, minor structural protein that forms a portal-like structure at a unique three-fold axis of symmetry, following binding to the host receptor. The channel formed by VP2 may allow the delivery of the viral genome through the host endosomal membrane. This is Minor capsid protein VP2 from Norovirus (strain Human/NoV/United States/Norwalk/1968/GI) (Hu/NV/NV/1968/US).